A 350-amino-acid chain; its full sequence is Small ribosomal subunit biogenesis GTPase RsgA (350 aa).

Over residues 1–17 the composition is skewed to polar residues; sequence MSKNKLSKGQQRRVQAN. The interval 1–35 is disordered; it reads MSKNKLSKGQQRRVQANHQRRLRTDRKPELDDSQL. In terms of domain architecture, CP-type G spans 103-273; it reads TSVLTRPDLY…VIDSPGVREF (171 aa). GTP is bound by residues 159 to 162 and 213 to 221; these read NKID and GQSGVGKSS. The Zn(2+) site is built by Cys297, Cys302, His304, and Cys310.

This sequence belongs to the TRAFAC class YlqF/YawG GTPase family. RsgA subfamily. Monomer. Associates with 30S ribosomal subunit, binds 16S rRNA. Requires Zn(2+) as cofactor.

The protein localises to the cytoplasm. Functionally, one of several proteins that assist in the late maturation steps of the functional core of the 30S ribosomal subunit. Helps release RbfA from mature subunits. May play a role in the assembly of ribosomal proteins into the subunit. Circularly permuted GTPase that catalyzes slow GTP hydrolysis, GTPase activity is stimulated by the 30S ribosomal subunit. This chain is Small ribosomal subunit biogenesis GTPase RsgA, found in Yersinia enterocolitica serotype O:8 / biotype 1B (strain NCTC 13174 / 8081).